Consider the following 608-residue polypeptide: Translation initiation factor RLI1 (608 aa).

4Fe-4S ferredoxin-type domains are found at residues 7–39 and 46–75; these read RIAI…KLCI and KIAF…IINL. ABC transporter domains follow at residues 70–320 and 345–568; these read IQII…FLDG and LQND…LKNL. 110–117 contacts ATP; the sequence is GTNGIGKS. Phosphoserine is present on Ser349. 385-392 contacts ATP; the sequence is GENGTGKT.

The protein belongs to the ABC transporter superfamily. ABCE family. As to quaternary structure, component of the multifactor complex (MFC) composed of at least RLI1, the eIF2 subunit SUI2, TIF5/eIF5, and the eIF3 subunits PRT1, HCR1, NIP1, RPG1, TIF34 and TIF35. The complex associates with pre-initiation complexes. Interacts with the complex YAE1:LTO1; the complex bridges the interaction between the CIA complex and RLI1.

Its subcellular location is the cytoplasm. The protein resides in the nucleus. Functionally, component of the multifactor complex (MFC) involved in translation initiation. Required for the binding of MFC to the 40S ribosome. Required for the processing and nuclear export of the 60S and 40S ribosomal subunits. The sequence is that of Translation initiation factor RLI1 (RLI1) from Saccharomyces cerevisiae (strain ATCC 204508 / S288c) (Baker's yeast).